Consider the following 493-residue polypeptide: Transmembrane and coiled-coil domain-containing protein 6 (493 aa).

The stretch at 15-84 (GVEELRRRRR…QRGTEEKERE (70 aa)) forms a coiled coil. The next 2 membrane-spanning stretches (helical) occupy residues 338-358 (VVAALFILLQFFFQKQPSLLP) and 386-406 (PLLQLLPVSNVVSVMVLTVLC).

The protein localises to the membrane. In Homo sapiens (Human), this protein is Transmembrane and coiled-coil domain-containing protein 6 (TMCO6).